We begin with the raw amino-acid sequence, 370 residues long: MAWTLVLLVLLGTSSCLDAKELHKKIDISALLESGSGSGEEGSSGSGSAPEPVRDQDVDWKQFKIKPEQCLDKGENCTGDPEQCQENWQEMVVQCPFSCRFCSQRSIDDVTECTDARGAACKDWADNRNDCLRFPQFMSTECTKSCKLCGKETNGKKFDKDVRCIEWAKNGYCNEGELYKEKCPHNCEVHKSIKKEPKGPYPYPTESLYPYQYWQLYPAPGPAPYPPYPYPTAAPYPYQYSPYPYTPYPPPPYPNPYPQPPYPPPPPPYPNPYPQPPYPPPPAPCSGPGPCPYPGPPPPPYPAPTPYPPPPPPYPEQVPPPPPPPPPPPPPPPYPYPYPYPDESENTKHKSKKHAKHHEKHHKENHSKKS.

An N-terminal signal peptide occupies residues 1 to 19; that stretch reads MAWTLVLLVLLGTSSCLDA. The interval 34 to 55 is disordered; that stretch reads SGSGSGEEGSSGSGSAPEPVRD. Over residues 36 to 45 the composition is skewed to gly residues; the sequence is SGSGEEGSSG. ShKT domains follow at residues 70–102, 113–149, and 155–190; these read CLDK…CRFC, CTDA…CKLC, and GKKF…CEVH. 8 disulfide bridges follow: cysteine 70-cysteine 102, cysteine 77-cysteine 95, cysteine 84-cysteine 99, cysteine 113-cysteine 149, cysteine 121-cysteine 142, cysteine 131-cysteine 146, cysteine 164-cysteine 183, and cysteine 173-cysteine 187. A compositionally biased stretch (pro residues) spans 306–340; it reads PYPPPPPPYPEQVPPPPPPPPPPPPPPPYPYPYPY. Residues 306–370 form a disordered region; it reads PYPPPPPPYP…HHKENHSKKS (65 aa). Residues 349–370 are compositionally biased toward basic residues; that stretch reads HKSKKHAKHHEKHHKENHSKKS.

It belongs to the NEP3 family. Nematocytes. In late planulae, transcripts are found throughout the ectoderm in nematocytes, with high concentration of expressing cells in the oral pole. In primary polyps, is expressed in nematocytes in the body wall and physa ectoderm and in the upper and lower pharynx.

It localises to the nematocyst. Its subcellular location is the secreted. The protein is Nematocyst expressed protein 4 of Nematostella vectensis (Starlet sea anemone).